The chain runs to 165 residues: Protein OPG091 (165 aa).

Belongs to the orthopoxvirus OPG091 family.

The protein resides in the virion. It is found in the host cytoplasm. Contributes to virulence in host but not to replication in cell culture. The protein is Protein OPG091 (OPG091) of Cynomys gunnisoni (Gunnison's prairie dog).